The chain runs to 344 residues: Ribosomal RNA small subunit methyltransferase H 2 (344 aa).

S-adenosyl-L-methionine-binding positions include 78–80, aspartate 98, phenylalanine 131, aspartate 145, and glutamine 152; that span reads GGH.

It belongs to the methyltransferase superfamily. RsmH family.

Its subcellular location is the cytoplasm. It carries out the reaction cytidine(1402) in 16S rRNA + S-adenosyl-L-methionine = N(4)-methylcytidine(1402) in 16S rRNA + S-adenosyl-L-homocysteine + H(+). In terms of biological role, specifically methylates the N4 position of cytidine in position 1402 (C1402) of 16S rRNA. The sequence is that of Ribosomal RNA small subunit methyltransferase H 2 from Acholeplasma laidlawii (strain PG-8A).